Here is a 179-residue protein sequence, read N- to C-terminus: Large ribosomal subunit protein uL6 (179 aa).

The protein belongs to the universal ribosomal protein uL6 family. Part of the 50S ribosomal subunit.

This protein binds to the 23S rRNA, and is important in its secondary structure. It is located near the subunit interface in the base of the L7/L12 stalk, and near the tRNA binding site of the peptidyltransferase center. The polypeptide is Large ribosomal subunit protein uL6 (Pseudomonas savastanoi pv. phaseolicola (strain 1448A / Race 6) (Pseudomonas syringae pv. phaseolicola (strain 1448A / Race 6))).